The chain runs to 468 residues: Ubiquinone biosynthesis monooxygenase COQ6, mitochondrial (468 aa).

A mitochondrion-targeting transit peptide spans 1 to 28; that stretch reads MAARLVSRCGAVRAAPHSGPLVSWRRWS.

Belongs to the UbiH/COQ6 family. As to quaternary structure, component of a multi-subunit COQ enzyme complex, composed of at least COQ3, COQ4, COQ5, COQ6, COQ7 and COQ9. Interacts with COQ8B and COQ7. Requires FAD as cofactor. In terms of tissue distribution, widely expressed.

Its subcellular location is the mitochondrion inner membrane. The protein localises to the golgi apparatus. It localises to the cell projection. The enzyme catalyses 4-hydroxy-3-(all-trans-decaprenyl)benzoate + 2 reduced [2Fe-2S]-[ferredoxin] + O2 + 2 H(+) = 3,4-dihydroxy-5-(all-trans-decaprenyl)benzoate + 2 oxidized [2Fe-2S]-[ferredoxin] + H2O. It carries out the reaction 2-methoxy-6-(all-trans-decaprenyl)phenol + 2 reduced [2Fe-2S]-[ferredoxin] + O2 + 2 H(+) = 2-methoxy-6-(all-trans-decaprenyl)benzene-1,4-diol + 2 oxidized [2Fe-2S]-[ferredoxin] + H2O. It functions in the pathway cofactor biosynthesis; ubiquinone biosynthesis. Functionally, FAD-dependent monooxygenase required for two non-consecutive steps during ubiquinone biosynthesis. Required for the C5-ring hydroxylation during ubiquinone biosynthesis by catalyzing the hydroxylation of 4-hydroxy-3-(all-trans-decaprenyl)benzoic acid to 3,4-dihydroxy-5-(all-trans-decaprenyl)benzoic acid. Also acts downstream of COQ4, for the C1-hydroxylation during ubiquinone biosynthesis by catalyzing the hydroxylation of 2-methoxy-6-(all-trans-decaprenyl)phenol to 2-methoxy-6-(all-trans-decaprenyl)benzene-1,4-diol. The electrons required for the hydroxylation reaction are funneled indirectly to COQ6 from NADPH via a ferredoxin/ferredoxin reductase system composed of FDX2 and FDXR. In Homo sapiens (Human), this protein is Ubiquinone biosynthesis monooxygenase COQ6, mitochondrial.